The sequence spans 330 residues: Phenylalanine--tRNA ligase alpha subunit (330 aa).

Residue E254 coordinates Mg(2+).

This sequence belongs to the class-II aminoacyl-tRNA synthetase family. Phe-tRNA synthetase alpha subunit type 1 subfamily. Tetramer of two alpha and two beta subunits. Requires Mg(2+) as cofactor.

It localises to the cytoplasm. The enzyme catalyses tRNA(Phe) + L-phenylalanine + ATP = L-phenylalanyl-tRNA(Phe) + AMP + diphosphate + H(+). The polypeptide is Phenylalanine--tRNA ligase alpha subunit (pheS) (Neisseria meningitidis serogroup B (strain ATCC BAA-335 / MC58)).